We begin with the raw amino-acid sequence, 101 residues long: Urease subunit beta (101 aa).

It belongs to the urease beta subunit family. Heterotrimer of UreA (gamma), UreB (beta) and UreC (alpha) subunits. Three heterotrimers associate to form the active enzyme.

The protein localises to the cytoplasm. It catalyses the reaction urea + 2 H2O + H(+) = hydrogencarbonate + 2 NH4(+). The protein operates within nitrogen metabolism; urea degradation; CO(2) and NH(3) from urea (urease route): step 1/1. The chain is Urease subunit beta from Bradyrhizobium sp. (strain BTAi1 / ATCC BAA-1182).